The chain runs to 196 residues: Peptidyl-tRNA hydrolase (196 aa).

Y18 is a tRNA binding site. The active-site Proton acceptor is the H23. Residues F69, N71, and N117 each contribute to the tRNA site.

This sequence belongs to the PTH family. Monomer.

It is found in the cytoplasm. It carries out the reaction an N-acyl-L-alpha-aminoacyl-tRNA + H2O = an N-acyl-L-amino acid + a tRNA + H(+). Its function is as follows. Hydrolyzes ribosome-free peptidyl-tRNAs (with 1 or more amino acids incorporated), which drop off the ribosome during protein synthesis, or as a result of ribosome stalling. Functionally, catalyzes the release of premature peptidyl moieties from peptidyl-tRNA molecules trapped in stalled 50S ribosomal subunits, and thus maintains levels of free tRNAs and 50S ribosomes. The protein is Peptidyl-tRNA hydrolase of Vibrio campbellii (strain ATCC BAA-1116).